Here is a 67-residue protein sequence, read N- to C-terminus: UPF0434 protein Lcho_2556 (67 aa).

Belongs to the UPF0434 family.

This is UPF0434 protein Lcho_2556 from Leptothrix cholodnii (strain ATCC 51168 / LMG 8142 / SP-6) (Leptothrix discophora (strain SP-6)).